We begin with the raw amino-acid sequence, 288 residues long: Killer cell lectin-like receptor 2 (288 aa).

Residues 1–45 (MSEQEVTYTTLRFHKSSGLQNPVRPEETQRPRDVGHRECSVPWKF) lie on the Cytoplasmic side of the membrane. The chain crosses the membrane as a helical; Signal-anchor for type II membrane protein span at residues 46-66 (IVIVLGILCFLLLLTVAVLVI). Residues 67 to 288 (HIFRDGQEKH…SALQRDEDES (222 aa)) are Extracellular-facing. N-linked (GlcNAc...) asparagine glycans are attached at residues Asn-94, Asn-105, and Asn-114. Residues 144–263 (QVEGYWFCCG…THGCICEKRL (120 aa)) enclose the C-type lectin domain. Disulfide bonds link Cys-151/Cys-156, Cys-169/Cys-257, Cys-173/Cys-259, and Cys-238/Cys-251. Asn-177 carries an N-linked (GlcNAc...) asparagine glycan.

As to quaternary structure, homodimer; disulfide-linked.

Its subcellular location is the membrane. Receptor on natural killer (NK) cells for class I MHC. This chain is Killer cell lectin-like receptor 2 (Klra2), found in Mus musculus (Mouse).